Here is a 362-residue protein sequence, read N- to C-terminus: Peptide chain release factor 1 (362 aa).

The residue at position 240 (Gln-240) is an N5-methylglutamine.

The protein belongs to the prokaryotic/mitochondrial release factor family. Methylated by PrmC. Methylation increases the termination efficiency of RF1.

The protein resides in the cytoplasm. Functionally, peptide chain release factor 1 directs the termination of translation in response to the peptide chain termination codons UAG and UAA. In Bifidobacterium longum (strain DJO10A), this protein is Peptide chain release factor 1.